The primary structure comprises 601 residues: Putative helicase 7 (601 aa).

The Helicase ATP-binding domain maps to 17–182 (QSFLMSDKNL…IIDAEIIKTD (166 aa)). ATP is bound at residue 30 to 37 (APTGTGKS). The short motif at 129–132 (DEIH) is the DEAH box element. Residues 208 to 375 (LKEDFIKKMV…VLEDFLLALI (168 aa)) enclose the Helicase C-terminal domain.

The polypeptide is Putative helicase 7 (SIFV0007) (Saccharolobus islandicus (Sulfolobus islandicus)).